A 733-amino-acid chain; its full sequence is Polyribonucleotide nucleotidyltransferase (733 aa).

Mg(2+)-binding residues include Asp503 and Asp509. Positions 570–629 (PRLTTIQIPVDAIGMVIGKGGETIRSITEETGAEINIDDDGTVTIACSSPEATKAAVETI) constitute a KH domain. The 75-residue stretch at 639 to 713 (GTIYMGKVRD…GKTKFALSIK (75 aa)) folds into the S1 motif domain.

Belongs to the polyribonucleotide nucleotidyltransferase family. The cofactor is Mg(2+).

Its subcellular location is the cytoplasm. The catalysed reaction is RNA(n+1) + phosphate = RNA(n) + a ribonucleoside 5'-diphosphate. Involved in mRNA degradation. Catalyzes the phosphorolysis of single-stranded polyribonucleotides processively in the 3'- to 5'-direction. The protein is Polyribonucleotide nucleotidyltransferase of Chlorobaculum tepidum (strain ATCC 49652 / DSM 12025 / NBRC 103806 / TLS) (Chlorobium tepidum).